Consider the following 304-residue polypeptide: MDPLEDVLTLLKTRSHLSASLVAGGRWAVRFDAPRVVKFNAVRRGTCQLEVDGIDEPIDLAEGDCYLLTRPRSFTLRSDPETAPVDGGVVFARAEDGIARAGQGDDVFLIGGGFSFGTRAQELLLDRLPPIVHVPADTPHAETVQWALTAIDQELTHRPMASTLIAEHLAVIMLVHVLRLHLERAPHAVSGWLAGLADPVVATALTCLHRDPARSWTVADLADTAAVSRSTLAARFKATVGQGPLEYLTRWRIELAARQLREGNATLASIAHSVGYGSESALSVAFKRVLGMPPGDYRKHPTMP.

The HTH araC/xylS-type domain occupies 202 to 300; that stretch reads ATALTCLHRD…GMPPGDYRKH (99 aa). 2 consecutive DNA-binding regions (H-T-H motif) follow at residues 219 to 240 and 267 to 290; these read ADLA…KATV and LASI…KRVL.

This chain is Putative AraC-like transcription regulator, found in Streptomyces lividans.